We begin with the raw amino-acid sequence, 568 residues long: Phosphoprotein (568 aa).

Disordered stretches follow at residues 1 to 23 (MDQD…GGRE) and 38 to 320 (SEPT…GIGE). Over residues 7-20 (ILKEDSEVEREAPG) the composition is skewed to basic and acidic residues. Residues 33–41 (DAVLSSEPT) are N0 binding. Residues 50–59 (LHNTINTPQG) are compositionally biased toward polar residues. Position 68 is a phosphoserine; by host (Ser68). The span at 83–101 (RSGEESRVSGRTSKPEAEA) shows a compositional bias: basic and acidic residues. At Ser125 the chain carries Phosphoserine; by host. Positions 150 to 168 (GIEDENREMAAHPDKRGED) are enriched in basic and acidic residues. The segment covering 191-206 (ASNNGRSMEPGSSHSA) has biased composition (polar residues). Residues Ser192, Ser249, Ser257, and Ser260 each carry the phosphoserine; by host modification. Multimerization regions lie at residues 344–411 (FESS…KRFS) and 362–432 (ANYA…HIIT). The segment at 345-412 (ESSRDASYVF…FRDIYKRFSE (68 aa)) is bipartite nucleocapsid binding domain 1. Residues 364 to 429 (YAEMTFNVCG…LLMSNLSTLH (66 aa)) adopt a coiled-coil conformation. L protein binding regions lie at residues 412-445 (EYQK…DSLT) and 413-445 (YQKE…DSLT). A phosphoserine; by host mark is found at Ser447 and Ser449. The tract at residues 479-568 (DLIREDEFRD…VEEDIESLTN (90 aa)) is bipartite nucleocapsid binding domain 2. The segment at 479-568 (DLIREDEFRD…VEEDIESLTN (90 aa)) is interaction with the nucleocapsid (N-RNA). A disordered region spans residues 495-516 (YQERDTEPRASNASRLLPSKEK). Residues 547–566 (KTDQEVKAVMELVEEDIESL) are formation of N-RNA complex involved in transcription and replication.

Belongs to the respirovirus P protein family. Homotetramer. Interacts (via multimerization domain) with polymerase L; this interaction forms the polymerase complex. Interacts (via N-terminus) with N0; this interaction allows P to chaperon N0 before encapsidation and form the N-P complex. Interacts (via C-terminus) with N-RNA template; this interaction positions the polymerase on the template. Phosphorylated by PKC/PRKCZ, and other unknown kinases. Phosphorylation is necessary for viral transcription and replication. The N-terminus contains the majority of phosphorylated sites. Ser-249 is the major site of phosphorylation, but is not necessary for most functions.

The protein localises to the host cytoplasm. Essential cofactor of the RNA polymerase L that plays a central role in the transcription and replication by forming the polymerase complex with RNA polymerase L and recruiting L to the genomic N-RNA template for RNA synthesis. Also plays a central role in the encapsidation of nascent RNA chains by forming the encapsidation complex with the nucleocapsid protein N (N-P complex). Acts as a chaperone for newly synthesized free N protein, so-called N0, allowing encapsidation of nascent RNA chains during replication. The nucleoprotein protein N prevents excessive phosphorylation of P, which leads to down-regulation of viral transcription/ replication. Participates, together with N, in the formation of viral factories (viroplasms), which are large inclusions in the host cytoplasm where replication takes place. Recruits host PI4KB and remodel the host endoplasmic reticulum membrane to form viral replication factories. This is Phosphoprotein (P/V/C) from Sendai virus (strain Fushimi) (SeV).